Reading from the N-terminus, the 433-residue chain is MKRQALTLIPLLGAAAAQSGPYGQCGGNDWSGATTCVSGYVCVYQNEWYSQCVPGTATSSSTTLTTTTSATTRTTTTTTSTTSVPSSTNFPSASGLNFTIDGVTDYFAGSNSYWISMLTNDADVDLVLDHIASSGHKILRIWGFNDVNTEPSTGQVWFQKHQGGVSTINTGQYGLQRLDAVVSSAEKRGIKLIINFVNNWDDYGGMSAYLNAYGGSTKTDWYTSATIQAAYRTYIKAVIDRFIDSPAIFAWELANEPRCNGCDTSILYDWIADTSAYIKSLDPLHMVCIGDEGFGLDEGSDGSYPFSYNEGLDFAANLAIDTIDFGTFHLYPGSWGVSYDWGNLWAITHGAACATAGKPCLFEEYGAPSDHCAIEVPWQTTAVSSTGIAGDLFWQWGDTLSTGQTHNDGNTIYYGSDEYTCMVTEHMERIAAR.

An N-terminal signal peptide occupies residues 1 to 19; that stretch reads MKRQALTLIPLLGAAAAQS. A CBM1 domain is found at 20 to 53; that stretch reads GPYGQCGGNDWSGATTCVSGYVCVYQNEWYSQCV. Residues 56–82 form a thr-rich linker region; that stretch reads TATSSSTTLTTTTSATTRTTTTTTSTT. The tract at residues 83 to 433 is catalytic; it reads SVPSSTNFPS…TEHMERIAAR (351 aa). N-linked (GlcNAc...) asparagine glycosylation is present at Asn97. 2 residues coordinate substrate: Trp142 and Asn255. Glu256 acts as the Proton donor in catalysis. Tyr331 is a substrate binding site. The active-site Nucleophile is the Glu364. Trp394 contributes to the substrate binding site.

Belongs to the glycosyl hydrolase 5 (cellulase A) family.

It localises to the secreted. It carries out the reaction Random hydrolysis of (1-&gt;4)-beta-D-mannosidic linkages in mannans, galactomannans and glucomannans.. Its function is as follows. Endo-1,4-mannanase, a crucial enzyme for depolymerization of seed galactomannans and wood galactoglucomannans. This chain is Probable mannan endo-1,4-beta-mannosidase F (manF), found in Emericella nidulans (strain FGSC A4 / ATCC 38163 / CBS 112.46 / NRRL 194 / M139) (Aspergillus nidulans).